Reading from the N-terminus, the 184-residue chain is Ribosome-recycling factor (184 aa).

This sequence belongs to the RRF family.

The protein resides in the cytoplasm. In terms of biological role, responsible for the release of ribosomes from messenger RNA at the termination of protein biosynthesis. May increase the efficiency of translation by recycling ribosomes from one round of translation to another. This is Ribosome-recycling factor from Desulfotalea psychrophila (strain LSv54 / DSM 12343).